A 560-amino-acid polypeptide reads, in one-letter code: Tudor and KH domain-containing protein (560 aa).

KH domains follow at residues 52-115 (DIEI…KAAI) and 124-190 (PVFE…KHLI). Residues Lys-65, Lys-76, Lys-110, Lys-112, Lys-152, Lys-175, Lys-181, Lys-187, and Lys-193 each participate in a glycyl lysine isopeptide (Lys-Gly) (interchain with G-Cter in ubiquitin) cross-link. Residues 211–230 (RVPRKQPISVRREEVTEPGG) are disordered. Glycyl lysine isopeptide (Lys-Gly) (interchain with G-Cter in ubiquitin) cross-links involve residues Lys-256 and Lys-267. The disordered stretch occupies residues 268-291 (EGSWEKPNDDSFQNSGAQSSPETS). The span at 277-290 (DSFQNSGAQSSPET) shows a compositional bias: polar residues. Residue Ser-278 is modified to Phosphoserine. Positions 353-412 (TVHVGDIVAAPLSTNGSWYRARVLGTLENGNLDLYFVDFGDNGDCALKDLRALRSDFLSL) constitute a Tudor domain. Glycyl lysine isopeptide (Lys-Gly) (interchain with G-Cter in ubiquitin) cross-links involve residues Lys-479, Lys-510, and Lys-529.

This sequence belongs to the Tdrkh family. In terms of assembly, interacts with (symmetrically methylated) PIWIL1, PIWIL2 and PIWIL4. In terms of processing, ubiquitinated by PRKN during mitophagy, leading to its degradation and enhancement of mitophagy. Deubiquitinated by USP30. Highly expressed in testis, present at lower level in brain. Weakly or not expressed in other tissues (at protein level).

It localises to the cytoplasm. The protein localises to the mitochondrion. In terms of biological role, participates in the primary piRNA biogenesis pathway and is required during spermatogenesis to repress transposable elements and prevent their mobilization, which is essential for the germline integrity. The piRNA metabolic process mediates the repression of transposable elements during meiosis by forming complexes composed of piRNAs and Piwi proteins and govern the methylation and subsequent repression of transposons. Required for the final steps of primary piRNA biogenesis by participating in the processing of 31-37 nt intermediates into mature piRNAs. May act in pi-bodies and piP-bodies by transferring piRNA precursors or intermediates to or between these granules. This is Tudor and KH domain-containing protein (Tdrkh) from Mus musculus (Mouse).